The chain runs to 549 residues: Dihydroxy-acid dehydratase (549 aa).

Asp-78 is a binding site for Mg(2+). [2Fe-2S] cluster is bound at residue Cys-119. Asp-120 and Lys-121 together coordinate Mg(2+). The residue at position 121 (Lys-121) is an N6-carboxylysine. Cys-191 lines the [2Fe-2S] cluster pocket. Position 441 (Glu-441) interacts with Mg(2+). Residue Ser-466 is the Proton acceptor of the active site.

The protein belongs to the IlvD/Edd family. Homodimer. Requires [2Fe-2S] cluster as cofactor. The cofactor is Mg(2+).

The catalysed reaction is (2R)-2,3-dihydroxy-3-methylbutanoate = 3-methyl-2-oxobutanoate + H2O. The enzyme catalyses (2R,3R)-2,3-dihydroxy-3-methylpentanoate = (S)-3-methyl-2-oxopentanoate + H2O. The protein operates within amino-acid biosynthesis; L-isoleucine biosynthesis; L-isoleucine from 2-oxobutanoate: step 3/4. It functions in the pathway amino-acid biosynthesis; L-valine biosynthesis; L-valine from pyruvate: step 3/4. In terms of biological role, functions in the biosynthesis of branched-chain amino acids. Catalyzes the dehydration of (2R,3R)-2,3-dihydroxy-3-methylpentanoate (2,3-dihydroxy-3-methylvalerate) into 2-oxo-3-methylpentanoate (2-oxo-3-methylvalerate) and of (2R)-2,3-dihydroxy-3-methylbutanoate (2,3-dihydroxyisovalerate) into 2-oxo-3-methylbutanoate (2-oxoisovalerate), the penultimate precursor to L-isoleucine and L-valine, respectively. The polypeptide is Dihydroxy-acid dehydratase (Methanobrevibacter smithii (strain ATCC 35061 / DSM 861 / OCM 144 / PS)).